The primary structure comprises 790 residues: IQ motif and ubiquitin-like domain-containing protein (790 aa).

Polar residues predominate over residues 1-17 (MSNQPKKYETQNIANST). Residues 1-49 (MSNQPKKYETQNIANSTEESDAFDIVTIPVPSEEPQESDQTEEHESGIE) are disordered. Residues 130-206 (ATVKVVLIPV…IQVEIFSTNP (77 aa)) form the Ubiquitin-like domain. One can recognise an IQ domain in the interval 337–366 (RLKAVIVIQTYYRQWHAKIFVEDLRRQKSL).

In terms of assembly, component of the axonemal radial spoke 1 (RS1) complex, at least composed of spoke head proteins RSPH1, RSPH3, RSPH9 and the cilia-specific component RSPH4A or sperm-specific component RSPH6A, spoke stalk proteins RSPH14, DNAJB13, DYDC1, ROPN1L and NME5, and the anchor protein IQUB. Does not appear to be part of radial spoke complexes 2 or 3 (RS2 or RS3). Interacts with CALM1. Interacts with DNAJB13. Interacts with DYNLL2. Interacts with NME5. Interacts with RSPH3. Interacts with RSPH9. Interacts with ZMYND10. Interacts with calmodulin; the interaction occurs in conditions of low but not high calcium.

It localises to the cytoplasm. The protein localises to the cytoskeleton. The protein resides in the flagellum axoneme. It is found in the cell projection. Its subcellular location is the cilium. Its function is as follows. Adapter protein that anchors the radial spoke 1 (RS1) complex to the A microtubule of outer doublet microtubules in axonemes. The triple radial spokes (RS1, RS2 and RS3) are required to modulate beating of the sperm flagellum. May play a role in inhibiting signaling via MAPK1/ERK2 and MAPK3/ERK1. Additionally, may play a role in the functioning of cilia. Not required for the functioning of tracheal or ependymal cilia. The chain is IQ motif and ubiquitin-like domain-containing protein (IQUB) from Macaca fascicularis (Crab-eating macaque).